Here is a 480-residue protein sequence, read N- to C-terminus: uncharacterized protein (480 aa).

Residues 1-20 form a disordered region; sequence MDVKDTGINRSDTPISDQDH.

This is an uncharacterized protein from Arabidopsis thaliana (Mouse-ear cress).